Consider the following 263-residue polypeptide: Probable ribosomal RNA small subunit methyltransferase A (263 aa).

Residues Leu-12, Gly-37, Glu-58, Asp-83, and Asn-100 each coordinate S-adenosyl-L-methionine.

This sequence belongs to the class I-like SAM-binding methyltransferase superfamily. rRNA adenine N(6)-methyltransferase family. RsmA subfamily.

It is found in the cytoplasm. Functionally, specifically dimethylates two adjacent adenosines in the loop of a conserved hairpin near the 3'-end of 16S rRNA in the 30S particle. May play a critical role in biogenesis of 30S subunits. The protein is Probable ribosomal RNA small subunit methyltransferase A of Methanococcus maripaludis (strain C6 / ATCC BAA-1332).